Consider the following 46-residue polypeptide: Escargot/snail protein homolog (46 aa).

3 C2H2-type zinc fingers span residues 1–4 (IRTH), 8–30 (CKCP…TTHH), and 36–46 (FSCQHCNRAFA).

This sequence belongs to the snail C2H2-type zinc-finger protein family.

Its subcellular location is the nucleus. The polypeptide is Escargot/snail protein homolog (Oryzias latipes (Japanese rice fish)).